A 207-amino-acid chain; its full sequence is Guanylate kinase (207 aa).

One can recognise a Guanylate kinase-like domain in the interval 4-184 (GILFIISAPS…AINDLRTIII (181 aa)). Position 11 to 18 (11 to 18 (APSGTGKS)) interacts with ATP.

This sequence belongs to the guanylate kinase family.

It localises to the cytoplasm. The enzyme catalyses GMP + ATP = GDP + ADP. Essential for recycling GMP and indirectly, cGMP. The polypeptide is Guanylate kinase (Buchnera aphidicola subsp. Schizaphis graminum (strain Sg)).